A 270-amino-acid chain; its full sequence is Proteasome subunit alpha (270 aa).

The interval 229–270 is disordered; the sequence is LLDTEAAGSTPTDAPSDTEDGDSTDGTDRADGTTDSTEETEK. Residues 244–253 show a composition bias toward acidic residues; it reads SDTEDGDSTD.

It belongs to the peptidase T1A family. The 20S proteasome core is composed of 14 alpha and 14 beta subunits that assemble into four stacked heptameric rings, resulting in a barrel-shaped structure. The two inner rings, each composed of seven catalytic beta subunits, are sandwiched by two outer rings, each composed of seven alpha subunits. The catalytic chamber with the active sites is on the inside of the barrel. Has a gated structure, the ends of the cylinder being occluded by the N-termini of the alpha-subunits. Is capped by the proteasome-associated ATPase, ARC.

Its subcellular location is the cytoplasm. It functions in the pathway protein degradation; proteasomal Pup-dependent pathway. Its activity is regulated as follows. The formation of the proteasomal ATPase ARC-20S proteasome complex, likely via the docking of the C-termini of ARC into the intersubunit pockets in the alpha-rings, may trigger opening of the gate for substrate entry. Interconversion between the open-gate and close-gate conformations leads to a dynamic regulation of the 20S proteasome proteolysis activity. Component of the proteasome core, a large protease complex with broad specificity involved in protein degradation. This is Proteasome subunit alpha from Streptomyces griseus subsp. griseus (strain JCM 4626 / CBS 651.72 / NBRC 13350 / KCC S-0626 / ISP 5235).